Here is a 340-residue protein sequence, read N- to C-terminus: Glycerol-3-phosphate dehydrogenase [NAD(P)+] (340 aa).

Residues Ser-13, Tyr-14, and Lys-108 each coordinate NADPH. Sn-glycerol 3-phosphate contacts are provided by Lys-108, Gly-137, and Thr-139. Ala-141 is an NADPH binding site. Positions 193, 246, 256, 257, and 258 each coordinate sn-glycerol 3-phosphate. Lys-193 serves as the catalytic Proton acceptor. Arg-257 serves as a coordination point for NADPH. Residues Ile-281 and Glu-283 each coordinate NADPH.

The protein belongs to the NAD-dependent glycerol-3-phosphate dehydrogenase family.

The protein localises to the cytoplasm. The catalysed reaction is sn-glycerol 3-phosphate + NAD(+) = dihydroxyacetone phosphate + NADH + H(+). The enzyme catalyses sn-glycerol 3-phosphate + NADP(+) = dihydroxyacetone phosphate + NADPH + H(+). It participates in membrane lipid metabolism; glycerophospholipid metabolism. Catalyzes the reduction of the glycolytic intermediate dihydroxyacetone phosphate (DHAP) to sn-glycerol 3-phosphate (G3P), the key precursor for phospholipid synthesis. The polypeptide is Glycerol-3-phosphate dehydrogenase [NAD(P)+] (Bartonella henselae (strain ATCC 49882 / DSM 28221 / CCUG 30454 / Houston 1) (Rochalimaea henselae)).